Reading from the N-terminus, the 203-residue chain is Orotate phosphoribosyltransferase (203 aa).

Residues Arg94, Lys98, His100, and 120–128 each bind 5-phospho-alpha-D-ribose 1-diphosphate; that span reads EDLISTGGS. Residue Ser124 participates in orotate binding.

Belongs to the purine/pyrimidine phosphoribosyltransferase family. PyrE subfamily. In terms of assembly, homodimer. The cofactor is Mg(2+).

The enzyme catalyses orotidine 5'-phosphate + diphosphate = orotate + 5-phospho-alpha-D-ribose 1-diphosphate. It participates in pyrimidine metabolism; UMP biosynthesis via de novo pathway; UMP from orotate: step 1/2. Catalyzes the transfer of a ribosyl phosphate group from 5-phosphoribose 1-diphosphate to orotate, leading to the formation of orotidine monophosphate (OMP). In Staphylococcus aureus (strain Mu50 / ATCC 700699), this protein is Orotate phosphoribosyltransferase.